The chain runs to 515 residues: ATP synthase subunit alpha (515 aa).

ATP is bound at residue 171–178; that stretch reads GDRQTGKT.

Belongs to the ATPase alpha/beta chains family. In terms of assembly, F-type ATPases have 2 components, CF(1) - the catalytic core - and CF(0) - the membrane proton channel. CF(1) has five subunits: alpha(3), beta(3), gamma(1), delta(1), epsilon(1). CF(0) has three main subunits: a(1), b(2) and c(9-12). The alpha and beta chains form an alternating ring which encloses part of the gamma chain. CF(1) is attached to CF(0) by a central stalk formed by the gamma and epsilon chains, while a peripheral stalk is formed by the delta and b chains.

Its subcellular location is the cell inner membrane. The catalysed reaction is ATP + H2O + 4 H(+)(in) = ADP + phosphate + 5 H(+)(out). Produces ATP from ADP in the presence of a proton gradient across the membrane. The alpha chain is a regulatory subunit. The chain is ATP synthase subunit alpha from Coxiella burnetii (strain CbuK_Q154) (Coxiella burnetii (strain Q154)).